The sequence spans 411 residues: Glucose-1-phosphate adenylyltransferase (411 aa).

Residues glycine 162, 177-178 (EK), and serine 195 contribute to the alpha-D-glucose 1-phosphate site.

Belongs to the bacterial/plant glucose-1-phosphate adenylyltransferase family. As to quaternary structure, homotetramer.

The enzyme catalyses alpha-D-glucose 1-phosphate + ATP + H(+) = ADP-alpha-D-glucose + diphosphate. The protein operates within glycan biosynthesis; glycogen biosynthesis. Its function is as follows. Involved in the biosynthesis of ADP-glucose, a building block required for the elongation reactions to produce glycogen. Catalyzes the reaction between ATP and alpha-D-glucose 1-phosphate (G1P) to produce pyrophosphate and ADP-Glc. This chain is Glucose-1-phosphate adenylyltransferase, found in Thermodesulfovibrio yellowstonii (strain ATCC 51303 / DSM 11347 / YP87).